The chain runs to 616 residues: MADKGMTYSFDVRDNTLVVRRSTATKSGIKISYREDRGTSLLQKAFAGTEDEFWVELDQDVYVDKKIREFLVEEKMKDMSTRVSGAVAAAIERSVEFDNFSKEAAANIEMAGVDDEEAGGSGLVDNRRKNKGVSNMAYNLSLFIGMVFPALTTFFSAILSEGEMSIWQNGQAIMRILALADEDGKRQTRTGGQRVDMADVTKLNVVTANGKVKQVEVNLNDLKAAFRQSRPKRSDYRKGQGSKATESSISNQCMALIMKSVLSADQLFAPGVKMMRTNGFNASYTTLAEGANIPSKYLRHMRNCGGVALDLMGMKRIKNSPEGAKSKIFSIIQKKVRGRCRTEEQRLLTSALKISDGENKFQRIMDTLCTSFLIDPPRTTKCFIPPISSLMMYIQEGNSVLAMDFMKNGEDACKICREAKLKVGVNSTFTMSVARTCVAVSMVATAFCSADIIENAVPGSERYRSNIKANTTKPKKDSTYTIQGLRLSNVRYEARPETSQSNTDRSWQVNVTDSFGGLAVFNQGAIREMLGDGTSETTSVNVRALVKRILKSASERSARAVKTFMVGEQGKSAIVISGVGLFSIDFEGVEEAERITDMTPEIEFDEDDEEEEDIDI.

2 short sequence motifs (nuclear localization signal) span residues 230-233 and 473-476; these read RPKR and KPKK.

In terms of assembly, homomultimerizes to form the nucleocapsid. Binds to viral genomic RNA. Protein-RNA contacts are mediated by a combination of electrostatic interactions between positively charged residues and the phosphate backbone and planar interactions between aromatic side chains and bases.

It localises to the virion. It is found in the host nucleus. The protein localises to the host nucleolus. Its function is as follows. Encapsidates the negative strand viral RNA, protecting it from nucleases. The encapsidated genomic RNA is termed the ribonucleoprotein (RNP) and serves as template for transcription and replication. The chain is Nucleoprotein from Gadus morhua (Atlantic cod).